The sequence spans 338 residues: Heat-inducible transcription repressor HrcA (338 aa).

This sequence belongs to the HrcA family.

Its function is as follows. Negative regulator of class I heat shock genes (grpE-dnaK-dnaJ and groELS operons). Prevents heat-shock induction of these operons. This is Heat-inducible transcription repressor HrcA from Thermotoga maritima (strain ATCC 43589 / DSM 3109 / JCM 10099 / NBRC 100826 / MSB8).